A 563-amino-acid chain; its full sequence is Ras and Rab interactor-like protein (563 aa).

A disordered region spans residues 181–208 (GWGTETPQQTEPETGQKYSLAPRKPTPH). Low complexity predominate over residues 184 to 196 (TETPQQTEPETGQ). The VPS9 domain occupies 381-518 (AQELRRLRRR…IAHYQPDTGR (138 aa)). The tract at residues 539–563 (TLHQQAQPTAQANQPFEEPWAIGDP) is disordered. The span at 542–553 (QQAQPTAQANQP) shows a compositional bias: low complexity.

As to quaternary structure, interacts with RAB5A, RAB22A and MUSK. In terms of tissue distribution, detected in thymus and spleen (at protein level). Detected in lung, liver, kidney, spleen, thymus and skeletal muscle.

Its subcellular location is the cell projection. It is found in the ruffle. The protein localises to the cytoplasmic vesicle. In terms of biological role, guanine nucleotide exchange factor (GEF) for RAB5A and RAB22A that activates RAB5A and RAB22A by exchanging bound GDP for free GTP. Plays a role in endocytosis via its role in activating Rab family members. This chain is Ras and Rab interactor-like protein (Rinl), found in Mus musculus (Mouse).